Here is a 334-residue protein sequence, read N- to C-terminus: ATP-dependent kinase YFH7 (334 aa).

30-38 (GHPGSGKST) is a binding site for ATP.

Belongs to the YFH7 family.

ATP-dependent kinase that could be involved in endoplasmic reticulum membrane assembly. The polypeptide is ATP-dependent kinase YFH7 (YFH7) (Eremothecium gossypii (strain ATCC 10895 / CBS 109.51 / FGSC 9923 / NRRL Y-1056) (Yeast)).